The chain runs to 547 residues: Undecaprenyl phosphate-alpha-4-amino-4-deoxy-L-arabinose arabinosyl transferase (547 aa).

The next 11 helical transmembrane spans lie at 1 to 21 (MKLT…LPLD), 83 to 103 (FASA…ALQL), 111 to 131 (FLAG…TYSV), 174 to 194 (FLTK…PYVI), 205 to 225 (FGPL…IAVH), 253 to 273 (APFW…LGLL), 286 to 306 (ISPE…FFSV), 311 to 331 (LLTY…ASAV), 346 to 366 (AWLN…LALS), 378 to 398 (GALA…FIQL), and 408 to 428 (SALC…QSLI).

The protein belongs to the glycosyltransferase 83 family.

Its subcellular location is the cell inner membrane. The catalysed reaction is 4-amino-4-deoxy-alpha-L-arabinopyranosyl di-trans,octa-cis-undecaprenyl phosphate + lipid IVA = lipid IIA + di-trans,octa-cis-undecaprenyl phosphate.. It functions in the pathway lipopolysaccharide metabolism; 4-amino-4-deoxy-beta-L-arabinose-lipid A biosynthesis. Functionally, catalyzes the transfer of the L-Ara4N moiety of the glycolipid undecaprenyl phosphate-alpha-L-Ara4N to lipid A. The modified arabinose is attached to lipid A and is required for resistance to polymyxin and cationic antimicrobial peptides. This is Undecaprenyl phosphate-alpha-4-amino-4-deoxy-L-arabinose arabinosyl transferase from Aeromonas salmonicida (strain A449).